The sequence spans 919 residues: MDYKESLLLPKTDFPMRGNLPQNEPVKYKQWDEKKVYEKMKKNRVGCPSFTLHDGPPYANGNIHIGHALNKILKDIINKFHYFEGKSIRYVPGWDCHGLPIEQKVEEKIGSEKKKELPKSKLRQLCRDHATKFVEIQKDEFKKLGVIADWENPYLTMDFKFEANIYRELCAIAKQGLLIQRSKPVYWSWAAQTALAEAEVEYEDKTSPSIYVAFEMSNESKAIHGLENKKAAFVIWTTTPWTLPANTGISLHPVEMYVLTSDGYIVAKALYSKLKEEAVINGEIVTEFEPFMFESNIAINPLNGRTSKIVLGDHVMMDSGTGAVHTAPGHGEDDYKVGLRYNLDVIMPVDAYGKYDETIVREKLFKDTNKYLGLNVFKANELILEELGSALLKRVDIRHSYPHCWRTHTPIIFRATKQWFISIDDKYGNKNNTLRENALEVVENLKFYPEWGRNRLKAMLEGRPDWCISRQRDWGVPIAFFRNKKTDEIIFDEKVLNYTAMIFEQKGCDAWYDLEIKELLYPGSGLNPDDLEKTLDILDVWFDSGSTQNAVLRSRNYDAGTFPADMYLEGSDQHRGWFQSSLLTTLASSEIAPYKSILTHGFTVDEKGEKMSKSKGNVVAPDKVIKEYGSEILRLWVAMSDYQSDLKISDNILKQNGELYRKIRNTARFLLANIDDLEEIIDVSKMGPLDKWILNKAKKVFDEIEAAFNVYEFSKGLNKLNNFLVVDLSGIYLDVCKDRLYCDDKKDIHRLASQSAMALIAKKLISTLACILTYTMDELLEFAPAFIKDGCEDIFDFKKVELPVVESSLDESILLSAKEKFSEIKDALSKEKVIKSTLELMLYTNSEDILALDEVEASDWFLVSQVSKDKQNSDILGSFQIDGKDFEVYKATAHKCPRCWKFTANAEESLCKRCEEVIK.

Positions 57–67 (PYANGNIHIGH) match the 'HIGH' region motif. E569 provides a ligand contact to L-isoleucyl-5'-AMP. Positions 610 to 614 (KMSKS) match the 'KMSKS' region motif. K613 serves as a coordination point for ATP. Residues C896, C899, C911, and C914 each contribute to the Zn(2+) site.

This sequence belongs to the class-I aminoacyl-tRNA synthetase family. IleS type 1 subfamily. As to quaternary structure, monomer. The cofactor is Zn(2+).

Its subcellular location is the cytoplasm. The catalysed reaction is tRNA(Ile) + L-isoleucine + ATP = L-isoleucyl-tRNA(Ile) + AMP + diphosphate. Functionally, catalyzes the attachment of isoleucine to tRNA(Ile). As IleRS can inadvertently accommodate and process structurally similar amino acids such as valine, to avoid such errors it has two additional distinct tRNA(Ile)-dependent editing activities. One activity is designated as 'pretransfer' editing and involves the hydrolysis of activated Val-AMP. The other activity is designated 'posttransfer' editing and involves deacylation of mischarged Val-tRNA(Ile). This is Isoleucine--tRNA ligase from Aliarcobacter butzleri (strain RM4018) (Arcobacter butzleri).